Reading from the N-terminus, the 377-residue chain is RIB43A-like with coiled-coils protein 2 (377 aa).

The stretch at 217 to 246 (NKNQVVELTERKRQEKQQEQEDNMTEITNL) forms a coiled coil. The interval 354-377 (KQMNTASSSQPTEDYFSQFNTRSR) is disordered.

Belongs to the RIB43A family. As to quaternary structure, microtubule inner protein component of sperm flagellar doublet microtubules.

It is found in the cytoplasm. Its subcellular location is the cytoskeleton. It localises to the cilium axoneme. The protein resides in the flagellum axoneme. Microtubule inner protein (MIP) part of the dynein-decorated doublet microtubules (DMTs) in cilia axoneme, which is required for motile cilia beating. This is RIB43A-like with coiled-coils protein 2 from Mus musculus (Mouse).